Reading from the N-terminus, the 98-residue chain is Aspartyl/glutamyl-tRNA(Asn/Gln) amidotransferase subunit C (98 aa).

The protein belongs to the GatC family. In terms of assembly, heterotrimer of A, B and C subunits.

The enzyme catalyses L-glutamyl-tRNA(Gln) + L-glutamine + ATP + H2O = L-glutaminyl-tRNA(Gln) + L-glutamate + ADP + phosphate + H(+). The catalysed reaction is L-aspartyl-tRNA(Asn) + L-glutamine + ATP + H2O = L-asparaginyl-tRNA(Asn) + L-glutamate + ADP + phosphate + 2 H(+). Its function is as follows. Allows the formation of correctly charged Asn-tRNA(Asn) or Gln-tRNA(Gln) through the transamidation of misacylated Asp-tRNA(Asn) or Glu-tRNA(Gln) in organisms which lack either or both of asparaginyl-tRNA or glutaminyl-tRNA synthetases. The reaction takes place in the presence of glutamine and ATP through an activated phospho-Asp-tRNA(Asn) or phospho-Glu-tRNA(Gln). This is Aspartyl/glutamyl-tRNA(Asn/Gln) amidotransferase subunit C from Arthrobacter sp. (strain FB24).